The chain runs to 226 residues: Large ribosomal subunit protein uL1 (226 aa).

The protein belongs to the universal ribosomal protein uL1 family. As to quaternary structure, part of the 50S ribosomal subunit.

Functionally, binds directly to 23S rRNA. The L1 stalk is quite mobile in the ribosome, and is involved in E site tRNA release. Its function is as follows. Protein L1 is also a translational repressor protein, it controls the translation of the L11 operon by binding to its mRNA. This Mycoplasma mycoides subsp. mycoides SC (strain CCUG 32753 / NCTC 10114 / PG1) protein is Large ribosomal subunit protein uL1.